The following is a 652-amino-acid chain: MSELPFLSPEGARGPHNNRGSQSSLEEGSVTGSEARHSLGVLNVSFSVSNRVGPWWNIKSCQQKWDRKILKDVSLYIESGQTMCILGSSGSGKTTLLDAISGRLRRTGTLEGEVFVNGCELRRDQFQDCVSYLLQSDVFLSSLTVRETLRYTAMLALRSSSADFYDKKVEAVLTELSLSHVADQMIGNYNFGGISSGERRRVSIAAQLLQDPKVMMLDEPTTGLDCMTANHIVLLLVELARRNRIVIVTIHQPRSELFHHFDKIAILTYGELVFCGTPEEMLGFFNNCGYPCPEHSNPFDFYMDLTSVDTQSREREIETYKRVQMLESAFRQSDICHKILENIERTRHLKTLPMVPFKTKNPPGMFCKLGVLLRRVTRNLMRNKQVVIMRLVQNLIMGLFLIFYLLRVQNNMLKGAVQDRVGLLYQLVGATPYTGMLNAVNLFPMLRAVSDQESQDGLYQKWQMLLAYVLHALPFSIVATVIFSSVCYWTLGLYPEVARFGYFSAALLAPHLIGEFLTLVLLGMVQNPNIVNSIVALLSISGLLIGSGFIRNIEEMPIPLKILGYFTFQKYCCEILVVNEFYGLNFTCGGSNTSVPNNPMCSMTQGIQFIEKTCPGATSRFTTNFLILYSFIPTLVILGMVVFKVRDYLISR.

Residues 1-30 (MSELPFLSPEGARGPHNNRGSQSSLEEGSV) form a disordered region. The Cytoplasmic portion of the chain corresponds to 1–384 (MSELPFLSPE…RVTRNLMRNK (384 aa)). The segment covering 18–30 (NRGSQSSLEEGSV) has biased composition (polar residues). Residues 39-294 (LGVLNVSFSV…FNNCGYPCPE (256 aa)) form the ABC transporter domain. 87 to 94 (GSSGSGKT) serves as a coordination point for ATP. A helical transmembrane segment spans residues 385 to 405 (QVVIMRLVQNLIMGLFLIFYL). One can recognise an ABC transmembrane type-2 domain in the interval 389–646 (MRLVQNLIMG…ILGMVVFKVR (258 aa)). At 406 to 422 (LRVQNNMLKGAVQDRVG) the chain is on the extracellular side. The helical transmembrane segment at 423–443 (LLYQLVGATPYTGMLNAVNLF) threads the bilayer. The Cytoplasmic portion of the chain corresponds to 444–468 (PMLRAVSDQESQDGLYQKWQMLLAY). Residues 469–490 (VLHALPFSIVATVIFSSVCYWT) traverse the membrane as a helical segment. Over 491–501 (LGLYPEVARFG) the chain is Extracellular. A helical transmembrane segment spans residues 502–522 (YFSAALLAPHLIGEFLTLVLL). Residues 523–529 (GMVQNPN) lie on the Cytoplasmic side of the membrane. Residues 530-550 (IVNSIVALLSISGLLIGSGFI) traverse the membrane as a helical segment. Over 551–624 (RNIEEMPIPL…PGATSRFTTN (74 aa)) the chain is Extracellular. Residues Asn-585 and Asn-592 are each glycosylated (N-linked (GlcNAc...) asparagine). Residues 625–645 (FLILYSFIPTLVILGMVVFKV) traverse the membrane as a helical segment. Residues 646-652 (RDYLISR) lie on the Cytoplasmic side of the membrane.

This sequence belongs to the ABC transporter superfamily. ABCG family. Eye pigment precursor importer (TC 3.A.1.204) subfamily. In terms of assembly, heterodimer with ABCG8. Requires Mg(2+) as cofactor. Post-translationally, N-glycosylated. N-glycosylation is important for efficient export out of the endoplasmic reticulum. As to expression, detected in liver (at protein level). Expressed only in liver and intestine.

It localises to the cell membrane. It is found in the apical cell membrane. It carries out the reaction cholesterol(in) + ATP + H2O = cholesterol(out) + ADP + phosphate + H(+). The enzyme catalyses sitosterol(in) + ATP + H2O = sitosterol(out) + ADP + phosphate + H(+). ABCG5 and ABCG8 form an obligate heterodimer that mediates Mg(2+)- and ATP-dependent sterol transport across the cell membrane. Plays an essential role in the selective transport of dietary plant sterols and cholesterol in and out of the enterocytes and in the selective sterol excretion by the liver into bile. Required for normal sterol homeostasis. The heterodimer with ABCG8 has ATPase activity. The polypeptide is ATP-binding cassette sub-family G member 5 (Rattus norvegicus (Rat)).